A 357-amino-acid polypeptide reads, in one-letter code: uncharacterized protein (357 aa).

The next 3 helical transmembrane spans lie at 21 to 41, 86 to 106, and 135 to 155; these read FIKI…LFSW, FFCL…CTLF, and GGFV…PVIF. Disordered regions lie at residues 184–229 and 283–357; these read DKNK…AMSD and KAGS…NKRN. Low complexity predominate over residues 195–223; that stretch reads TTNTTNFSGNGSSSSTTNATSSSSSQANN. Composition is skewed to basic and acidic residues over residues 305–314 and 322–337; these read KIEEYDNQKQ and KETN…EKET. Residues 305 to 337 are a coiled coil; that stretch reads KIEEYDNQKQEEEENEEKETNKQQTQKDDEKET. Over residues 346 to 357 the composition is skewed to basic residues; sequence KKSKKGKKNKRN.

It is found in the membrane. This is an uncharacterized protein from Dictyostelium discoideum (Social amoeba).